We begin with the raw amino-acid sequence, 55 residues long: Light-harvesting polypeptide B-800/860 beta chain (55 aa).

At 1–21 the chain is on the cytoplasmic side; it reads ADANKVWPTGLTVAEAEELHT. A helical membrane pass occupies residues 22–44; that stretch reads YVTNGFRVFVGIAVVAHVLVFAA. Residue His38 participates in a bacteriochlorophyll binding. Topologically, residues 45 to 55 are periplasmic; it reads HPWGRGGALVA.

The protein belongs to the antenna complex beta subunit family. In terms of assembly, the core complex is formed by different alpha and beta chains, binding bacteriochlorophyll molecules, and arranged most probably in tetrameric structures disposed around the reaction center. The non-pigmented gamma chains may constitute additional components.

It localises to the cell inner membrane. Its function is as follows. Antenna complexes are light-harvesting systems, which transfer the excitation energy to the reaction centers. This is Light-harvesting polypeptide B-800/860 beta chain from Rhodocyclus tenuis (Rhodospirillum tenue).